Consider the following 351-residue polypeptide: Tropomodulin-2 (351 aa).

Ser-25 is subject to Phosphoserine.

This sequence belongs to the tropomodulin family. In terms of assembly, binds to the N-terminus of tropomyosin and to actin. As to expression, neuronal-tissue specific.

It localises to the cytoplasm. It is found in the cytoskeleton. In terms of biological role, blocks the elongation and depolymerization of the actin filaments at the pointed end. The Tmod/TM complex contributes to the formation of the short actin protofilament, which in turn defines the geometry of the membrane skeleton. This is Tropomodulin-2 (Tmod2) from Mus musculus (Mouse).